Consider the following 134-residue polypeptide: Small ribosomal subunit protein uS9c (134 aa).

The interval 105–134 (QGYLTRNPLRKERKKYGLKKARKAPQFSKR) is disordered. Over residues 115–134 (KERKKYGLKKARKAPQFSKR) the composition is skewed to basic residues.

This sequence belongs to the universal ribosomal protein uS9 family.

It localises to the plastid. It is found in the chloroplast. The sequence is that of Small ribosomal subunit protein uS9c (rps9) from Nephroselmis olivacea (Green alga).